We begin with the raw amino-acid sequence, 80 residues long: RNA-binding protein Hfq (80 aa).

Residues 9 to 69 (DVFLNQVRKE…VSTISPNSPV (61 aa)) form the Sm domain.

It belongs to the Hfq family. As to quaternary structure, homohexamer.

Functionally, RNA chaperone that binds small regulatory RNA (sRNAs) and mRNAs to facilitate mRNA translational regulation in response to envelope stress, environmental stress and changes in metabolite concentrations. Also binds with high specificity to tRNAs. This is RNA-binding protein Hfq from Alkaliphilus oremlandii (strain OhILAs) (Clostridium oremlandii (strain OhILAs)).